A 206-amino-acid polypeptide reads, in one-letter code: D-ribitol-5-phosphate phosphatase (206 aa).

Asp8 functions as the Nucleophile in the catalytic mechanism. Positions 8 and 172 each coordinate Mg(2+).

Belongs to the HAD-like hydrolase superfamily. Mg(2+) is required as a cofactor.

It carries out the reaction D-ribitol 1-phosphate + H2O = ribitol + phosphate. The enzyme catalyses D-ribitol 5-phosphate + H2O = ribitol + phosphate. It catalyses the reaction 5-amino-6-(5-phospho-D-ribitylamino)uracil + H2O = 5-amino-6-(D-ribitylamino)uracil + phosphate. It functions in the pathway cofactor biosynthesis; riboflavin biosynthesis; 5-amino-6-(D-ribitylamino)uracil from GTP: step 4/4. In terms of biological role, catalyzes the dephosphorylation of D-ribitol-5-phosphate and D-ribitol-1-phosphate. Is also able to dephosphorylate 5-amino-6-(5-phospho-D-ribitylamino)uracil, and thus could be involved in the riboflavin biosynthesis pathway. This chain is D-ribitol-5-phosphate phosphatase, found in Bacteroides thetaiotaomicron (strain ATCC 29148 / DSM 2079 / JCM 5827 / CCUG 10774 / NCTC 10582 / VPI-5482 / E50).